A 175-amino-acid polypeptide reads, in one-letter code: Ribosome maturation factor RimM (175 aa).

The region spanning 96–175 is the PRC barrel domain; it reads DGDYYWKDLI…IIKVDWDPEF (80 aa).

This sequence belongs to the RimM family. Binds ribosomal protein uS19.

The protein resides in the cytoplasm. In terms of biological role, an accessory protein needed during the final step in the assembly of 30S ribosomal subunit, possibly for assembly of the head region. Essential for efficient processing of 16S rRNA. May be needed both before and after RbfA during the maturation of 16S rRNA. It has affinity for free ribosomal 30S subunits but not for 70S ribosomes. The sequence is that of Ribosome maturation factor RimM from Baumannia cicadellinicola subsp. Homalodisca coagulata.